A 118-amino-acid chain; its full sequence is Cell division protein FtsB (118 aa).

The Cytoplasmic segment spans residues 1-3 (MRL). Residues 4 to 21 (LFLVLLVLLGLIQYPLWL) form a helical membrane-spanning segment. At 22–118 (GKGGWFKVWD…PRPPATPPRR (97 aa)) the chain is on the periplasmic side. Residues 28-62 (KVWDLQRQVAEQRETNDGLRARNTALEAEVRDLAT) adopt a coiled-coil conformation. A disordered region spans residues 88–118 (LPPGTPLPSGNSTPQASALSKPRPPATPPRR). Residues 95–105 (PSGNSTPQASA) are compositionally biased toward polar residues. A compositionally biased stretch (pro residues) spans 109–118 (PRPPATPPRR).

This sequence belongs to the FtsB family. As to quaternary structure, part of a complex composed of FtsB, FtsL and FtsQ.

Its subcellular location is the cell inner membrane. In terms of biological role, essential cell division protein. May link together the upstream cell division proteins, which are predominantly cytoplasmic, with the downstream cell division proteins, which are predominantly periplasmic. The sequence is that of Cell division protein FtsB from Bordetella parapertussis (strain 12822 / ATCC BAA-587 / NCTC 13253).